The sequence spans 606 residues: Melanoma-associated antigen D2 (606 aa).

Disordered regions lie at residues 1–29 and 52–204; these read MSDT…MMQT and SEDV…GGRR. Ser-2 carries the post-translational modification N-acetylserine. A Phosphoserine modification is found at Ser-5. Thr-72 carries the phosphothreonine modification. The segment covering 79-100 has biased composition (polar residues); it reads PATQASSTTQLTDTQVLATENK. Over residues 122 to 131 the composition is skewed to basic and acidic residues; the sequence is ETKKVSHVAD. Residues 142–164 show a composition bias toward low complexity; sequence EAAPSQASADEPEPESAAAQSQE. Ser-157 bears the Phosphoserine mark. Residues 171-181 show a composition bias toward basic residues; sequence KVKAKKARKVK. Ser-190, Ser-191, Ser-194, Ser-197, Ser-244, and Ser-247 each carry phosphoserine. Residues 248-260 are compositionally biased toward basic residues; sequence PKARRGKARRRAA. Residues 248–275 are disordered; that stretch reads PKARRGKARRRAAKLQSSQEPEAPPPRD. Ser-264 and Ser-265 each carry phosphoserine. An MAGE domain is found at 279-478; that stretch reads LQGRANDLVK…KEWAAQYREA (200 aa). The segment at 534–563 is disordered; that stretch reads GAEAKAKAQESGSASTGASTSTNNSASASA.

As to quaternary structure, interacts with GNAS.

In terms of biological role, regulates the expression, localization to the plasma membrane and function of the sodium chloride cotransporters SLC12A1 and SLC12A3, two key components of salt reabsorption in the distal renal tubule. This Pongo abelii (Sumatran orangutan) protein is Melanoma-associated antigen D2 (MAGED2).